The sequence spans 70 residues: UPF0352 protein Sden_2336 (70 aa).

It belongs to the UPF0352 family.

This is UPF0352 protein Sden_2336 from Shewanella denitrificans (strain OS217 / ATCC BAA-1090 / DSM 15013).